A 283-amino-acid chain; its full sequence is 5'-nucleotidase SurE (283 aa).

The a divalent metal cation site is built by Asp-14, Asp-15, Ser-47, and Asn-105.

It belongs to the SurE nucleotidase family. The cofactor is a divalent metal cation.

It localises to the cytoplasm. It carries out the reaction a ribonucleoside 5'-phosphate + H2O = a ribonucleoside + phosphate. Its function is as follows. Nucleotidase that shows phosphatase activity on nucleoside 5'-monophosphates. The polypeptide is 5'-nucleotidase SurE (Chlamydia trachomatis serovar L2 (strain ATCC VR-902B / DSM 19102 / 434/Bu)).